The chain runs to 68 residues: Large ribosomal subunit protein bL32 (68 aa).

The protein belongs to the bacterial ribosomal protein bL32 family.

This Onion yellows phytoplasma (strain OY-M) protein is Large ribosomal subunit protein bL32.